Here is a 609-residue protein sequence, read N- to C-terminus: Autophagy-related protein 22-1 (609 aa).

A run of 4 helical transmembrane segments spans residues 95–115 (YYAG…GVEI), 117–137 (TASF…ILII), 151–171 (LLLV…LGVV), and 176–196 (MVGA…FVLL). Residues 214 to 238 (AREPPPALDGSRAQEGHSDTTNDID) are disordered. Residues 225 to 238 (RAQEGHSDTTNDID) are compositionally biased toward basic and acidic residues. N-linked (GlcNAc...) asparagine glycosylation is present at Asn-244. Residues 287-307 (IGIGYIGAIILQIVCILVVIA) traverse the membrane as a helical segment. N-linked (GlcNAc...) asparagine glycosylation occurs at Asn-309. A run of 3 helical transmembrane segments spans residues 317–337 (LVLF…ALWL), 381–401 (ILLF…VSGT), and 415–435 (AALG…AFSW). A glycan (N-linked (GlcNAc...) asparagine) is linked at Asn-443. A run of 4 helical transmembrane segments spans residues 450–470 (IIAC…GFIP), 487–509 (FPLG…SFFG), 522–542 (ALYA…VGII), and 552–572 (AFVF…LVDV).

The protein belongs to the ATG22 family.

It localises to the vacuole membrane. Its function is as follows. Vacuolar effluxer which mediate the efflux of amino acids resulting from autophagic degradation. The release of autophagic amino acids allows the maintenance of protein synthesis and viability during nitrogen starvation. This chain is Autophagy-related protein 22-1 (atg22-1), found in Neosartorya fischeri (strain ATCC 1020 / DSM 3700 / CBS 544.65 / FGSC A1164 / JCM 1740 / NRRL 181 / WB 181) (Aspergillus fischerianus).